The primary structure comprises 341 residues: MLNERIQPGMIFLLTVSLCHFMEYRAVQAGNCWLQQSKNGRCQVLYRTELSKEECCKTGRLGTSWTEEDVPNSTLFKWMIFHGGAPHCIPCKETCENVDCGPGKKCKMNKKNKPRCVCAPDCSNITWKGSVCGIDGKTYKDECALLKAKCKGVPELDVQYQGKCKKTCRDVLCPGSSSCVVDQTNNAYCVTCNRICPEPTSPDQYLCGNDGITYGSACHLRKATCLLGRSIGLAYEGKCIKAKSCEDIQCSAGKKCLWDSRVGRGRCALCDDLCGESKSDDTVCASDNTTYPSECAMKQAACSTGILLEVKHSGSCNSIVEDTEEEEEEEEPDYSFVISSW.

The N-terminal stretch at 1–29 is a signal peptide; that stretch reads MLNERIQPGMIFLLTVSLCHFMEYRAVQA. The TB domain occupies 30–103; it reads GNCWLQQSKN…TCENVDCGPG (74 aa). Intrachain disulfides connect Cys32/Cys55, Cys42/Cys88, Cys56/Cys91, Cys95/Cys106, Cys100/Cys116, Cys118/Cys150, Cys122/Cys143, and Cys132/Cys164. Asn72 carries an N-linked (GlcNAc...) asparagine glycan. The region spanning 94-117 is the Follistatin-like 1 domain; that stretch reads TCENVDCGPGKKCKMNKKNKPRCV. Kazal-like domains are found at residues 100-166, 186-241, and 264-318; these read CGPG…KCKK, NAYC…KCIK, and RGRC…SCNS. Residue Asn124 is glycosylated (N-linked (GlcNAc...) asparagine). Residues 167–190 form the Follistatin-like 2 domain; sequence TCRDVLCPGSSSCVVDQTNNAYCV. 3 cysteine pairs are disulfide-bonded: Cys192-Cys225, Cys196-Cys218, and Cys207-Cys239. Residues 244–268 enclose the Follistatin-like 3 domain; that stretch reads SCEDIQCSAGKKCLWDSRVGRGRCA. Cystine bridges form between Cys270–Cys302, Cys274–Cys295, and Cys284–Cys316. Asn288 carries N-linked (GlcNAc...) asparagine glycosylation. Residues 321–333 are compositionally biased toward acidic residues; it reads EDTEEEEEEEEPD. The disordered stretch occupies residues 321-341; that stretch reads EDTEEEEEEEEPDYSFVISSW.

As to quaternary structure, monomer. Spemann organizer and notochord.

The protein resides in the secreted. Functionally, binds directly to activin and functions as an activin antagonist which plays a role in neural induction. The short isoform is a more potent inhibitor of activin than the long isoform. Specific inhibitor of the biosynthesis and secretion of pituitary follicle stimulating hormone (FSH). This is Follistatin (fst) from Xenopus laevis (African clawed frog).